The chain runs to 197 residues: Small ribosomal subunit protein eS1 (197 aa).

It belongs to the eukaryotic ribosomal protein eS1 family.

The sequence is that of Small ribosomal subunit protein eS1 from Sulfolobus acidocaldarius (strain ATCC 33909 / DSM 639 / JCM 8929 / NBRC 15157 / NCIMB 11770).